A 238-amino-acid chain; its full sequence is Ribonuclease PH (238 aa).

Phosphate is bound by residues R86 and 124-126; that span reads GTR.

The protein belongs to the RNase PH family. In terms of assembly, homohexameric ring arranged as a trimer of dimers.

It catalyses the reaction tRNA(n+1) + phosphate = tRNA(n) + a ribonucleoside 5'-diphosphate. Its function is as follows. Phosphorolytic 3'-5' exoribonuclease that plays an important role in tRNA 3'-end maturation. Removes nucleotide residues following the 3'-CCA terminus of tRNAs; can also add nucleotides to the ends of RNA molecules by using nucleoside diphosphates as substrates, but this may not be physiologically important. Probably plays a role in initiation of 16S rRNA degradation (leading to ribosome degradation) during starvation. This is Ribonuclease PH from Haemophilus influenzae (strain 86-028NP).